A 265-amino-acid polypeptide reads, in one-letter code: Dimethylsulfide dehydrogenase subunit gamma (265 aa).

A signal peptide spans 1-25; it reads MPGFRFLLAATAAFLATSPALPLSA. The heme b site is built by histidine 81 and methionine 147.

In terms of assembly, heterotrimer of alpha, beta and gamma subunits. Requires heme b as cofactor.

The protein localises to the periplasm. May transfer electrons to the iron-sulfur centers of DdhB. The sequence is that of Dimethylsulfide dehydrogenase subunit gamma (ddhC) from Rhodovulum sulfidophilum (Rhodobacter sulfidophilus).